The following is a 413-amino-acid chain: Arginine biosynthesis bifunctional protein ArgJ (413 aa).

Substrate-binding residues include threonine 158, lysine 184, threonine 195, glutamate 285, asparagine 408, and serine 413. The active-site Nucleophile is the threonine 195.

It belongs to the ArgJ family. Heterotetramer of two alpha and two beta chains.

The protein localises to the cytoplasm. The enzyme catalyses N(2)-acetyl-L-ornithine + L-glutamate = N-acetyl-L-glutamate + L-ornithine. The catalysed reaction is L-glutamate + acetyl-CoA = N-acetyl-L-glutamate + CoA + H(+). The protein operates within amino-acid biosynthesis; L-arginine biosynthesis; L-ornithine and N-acetyl-L-glutamate from L-glutamate and N(2)-acetyl-L-ornithine (cyclic): step 1/1. Its pathway is amino-acid biosynthesis; L-arginine biosynthesis; N(2)-acetyl-L-ornithine from L-glutamate: step 1/4. Its function is as follows. Catalyzes two activities which are involved in the cyclic version of arginine biosynthesis: the synthesis of N-acetylglutamate from glutamate and acetyl-CoA as the acetyl donor, and of ornithine by transacetylation between N(2)-acetylornithine and glutamate. This Rhizobium meliloti (strain 1021) (Ensifer meliloti) protein is Arginine biosynthesis bifunctional protein ArgJ.